We begin with the raw amino-acid sequence, 397 residues long: T-box transcription factor TBX19 (397 aa).

Residues 48–216 (LWQRFREVTN…YNPFAKAFLD (169 aa)) constitute a DNA-binding region (T-box). The segment at 220–248 (RNHPKDAPEAASEGQHMTYSHSPQAPHGC) is disordered.

It is found in the nucleus. In terms of biological role, may be involved in the initial formation of the chordamesoderm. The polypeptide is T-box transcription factor TBX19 (Gallus gallus (Chicken)).